Consider the following 286-residue polypeptide: Pantothenate synthetase (286 aa).

Position 30–37 (30–37 (MGNLHDGH)) interacts with ATP. His-37 (proton donor) is an active-site residue. Gln-61 provides a ligand contact to (R)-pantoate. Gln-61 serves as a coordination point for beta-alanine. 149–152 (GEKD) contacts ATP. Gln-155 is a (R)-pantoate binding site. ATP is bound by residues Val-178 and 186 to 189 (LSSR).

It belongs to the pantothenate synthetase family. As to quaternary structure, homodimer.

It localises to the cytoplasm. It carries out the reaction (R)-pantoate + beta-alanine + ATP = (R)-pantothenate + AMP + diphosphate + H(+). Its pathway is cofactor biosynthesis; (R)-pantothenate biosynthesis; (R)-pantothenate from (R)-pantoate and beta-alanine: step 1/1. In terms of biological role, catalyzes the condensation of pantoate with beta-alanine in an ATP-dependent reaction via a pantoyl-adenylate intermediate. In Edwardsiella ictaluri (strain 93-146), this protein is Pantothenate synthetase.